The sequence spans 183 residues: Small ribosomal subunit protein uS4c (183 aa).

In terms of domain architecture, S4 RNA-binding spans 82–143 (MRLDNILFRL…KQRSKALIQN (62 aa)).

It belongs to the universal ribosomal protein uS4 family. Part of the 30S ribosomal subunit. Contacts protein S5. The interaction surface between S4 and S5 is involved in control of translational fidelity.

Its subcellular location is the plastid. It localises to the chloroplast. One of the primary rRNA binding proteins, it binds directly to 16S rRNA where it nucleates assembly of the body of the 30S subunit. Its function is as follows. With S5 and S12 plays an important role in translational accuracy. The polypeptide is Small ribosomal subunit protein uS4c (rps4) (Schizorhiza neglecta (Lapeirousia neglecta)).